A 221-amino-acid chain; its full sequence is Casparian strip membrane protein 3 (221 aa).

Basic and acidic residues predominate over residues 1–12 (MDIEKAGSRREE). The disordered stretch occupies residues 1 to 27 (MDIEKAGSRREEEEPIVQRPKLDKGKG). The Cytoplasmic segment spans residues 1-58 (MDIEKAGSRREEEEPIVQRPKLDKGKGKAHVFAPPMNYNRIMDKHKQEKMSPAGWKRG). Residues 59–79 (VAIFDFVLRLIAAITAMAAAA) traverse the membrane as a helical segment. Residues 80-109 (KMATTEETLPFFTQFLQFQADYTDLPTMSS) lie on the Extracellular side of the membrane. A helical transmembrane segment spans residues 110–130 (FVIVNSIVGGYLTLSLPFSIV). Residues 131–148 (CILRPLAVPPRLFLILCD) lie on the Cytoplasmic side of the membrane. A helical transmembrane segment spans residues 149 to 169 (TVMMGLTLMAASASAAIVYLA). Residues 170–194 (HNGNSSSNWLPVCQQFGDFCQGTSG) lie on the Extracellular side of the membrane. N-linked (GlcNAc...) asparagine glycosylation occurs at asparagine 173. A helical membrane pass occupies residues 195 to 215 (AVVASFIAATLLMFLVILSAF). Residues 216–221 (ALKRTT) are Cytoplasmic-facing.

The protein belongs to the Casparian strip membrane proteins (CASP) family. As to quaternary structure, homodimer and heterodimers with other CASP proteins. Interacts with CASP1, CASP2, CASP4 and CASP5.

The protein resides in the cell membrane. Functionally, regulates membrane-cell wall junctions and localized cell wall deposition. Required for establishment of the Casparian strip membrane domain (CSD) and the subsequent formation of Casparian strips, a cell wall modification of the root endodermis that determines an apoplastic barrier between the intraorganismal apoplasm and the extraorganismal apoplasm and prevents lateral diffusion. This is Casparian strip membrane protein 3 (CASP3) from Arabidopsis thaliana (Mouse-ear cress).